We begin with the raw amino-acid sequence, 1383 residues long: Cell surface hyaluronidase (1383 aa).

Positions 1-76 are disordered; sequence MYAAGSRGHS…QRTPSESRKR (76 aa). At 1 to 82 the chain is on the cytoplasmic side; that stretch reads MYAAGSRGHS…SRKRKRHKNT (82 aa). Phosphoserine occurs at positions 10, 53, and 63. The chain crosses the membrane as a helical; Signal-anchor for type II membrane protein span at residues 83–103; that stretch reads FICFAITSFSFFVALAVILGI. Topologically, residues 104-1383 are extracellular; the sequence is SSKYAPDENC…DLLQQALKVL (1280 aa). One can recognise a G8 domain in the interval 121 to 245; sequence RNWDPGQDSA…QRTSWTMLAR (125 aa). The region spanning 255–412 is the GG-type lectin 1 domain; sequence GSYAFEKDFS…ISLSGFRVDI (158 aa). The N-linked (GlcNAc...) asparagine glycan is linked to Asn292. PbH1 repeat units follow at residues 669-691, 711-733, and 791-812; these read HPNNHLINNAAAGSQDAGIWYLF, TPLGIFYNNRVHSNFKAGLFVDK, and GGDIIVQNSAFADNGKGLTFAS. N-linked (GlcNAc...) asparagine glycosylation is found at Asn914 and Asn1234. The GG-type lectin 2 domain occupies 1208 to 1366; it reads KSYLPVRFQS…MEEYGCSRTG (159 aa).

Belongs to the CEMIP family. Ca(2+) is required as a cofactor. Widely expressed. Strongly expressed in endothelial cells in the subcapsular sinus of lymph nodes and in the liver sinusoid, two primary sites implicated in systemic hyaluronan turnover.

It localises to the cell membrane. It carries out the reaction Random hydrolysis of (1-&gt;4)-linkages between N-acetyl-beta-D-glucosamine and D-glucuronate residues in hyaluronate.. Cell surface hyaluronidase that mediates the initial cleavage of extracellular high-molecular-weight hyaluronan into intermediate-size hyaluronan of approximately 5 kDa fragments. Very specific to hyaluronan; not able to cleave chondroitin sulfate or dermatan sulfate. Has an essential function in systemic hyaluronan catabolism and turnover and regulates cell adhesion and migration via hyaluronan degradation at focal adhesion sites. Acts as a regulator of angiogenesis and heart morphogenesis by mediating degradation of extracellular hyaluronan, thereby regulating VEGF signaling. This chain is Cell surface hyaluronidase, found in Mus musculus (Mouse).